A 403-amino-acid polypeptide reads, in one-letter code: Semaphorin-like protein A39 (403 aa).

A signal peptide spans 1-14 (MIPLLFILFYFANG). The 389-residue stretch at 15–403 (IEWHKFETSE…MPQMKKILKM (389 aa)) folds into the Sema domain.

This sequence belongs to the semaphorin family. Interacts with host VESPR.

The protein localises to the secreted. Its function is as follows. Acts as a semaphorin-like protein and binds to host plexin C1 receptor. May alter the movement of host plexin C1-expressing cells including dendritic cells, monocytes, or granulocytes in the proximity of infected cells. May also regulate host cell cytoskeleton of neighboring cells to improve viral infection. In Homo sapiens (Human), this protein is Semaphorin-like protein A39.